We begin with the raw amino-acid sequence, 363 residues long: MGNGTWEGCHVDSRVDHLFPPSLYIFVIGVGLPTNCLALWAAYRQVRQRNELGVYLMNLSIADLLYICTLPLWVDYFLHHDNWIHGPGSCKLFGFIFYTNIYISIAFLCCISVDRYLAVAHPLRFARLRRVKTAVAVSSVVWATELGANSVPLFHDELFRDRYNHTFCFEKFPMEGWVAWMNLYRVFVGFLFPWALMLLSYRGILRAVRGSVSTERQEKAKIKRLALSLIAIVLVCFAPYHVLLLSRSAVYLGHPWDCGFEERVFSAYHSSLAFTSLNCVADPILYCLVNEGARSDVAKALHNLLRFLTSDKPQEMASASLTLDTPLTSKRNSMARAVAAGWVASPPSQGDQVQLKMLPPPAP.

Over 1-8 (MGNGTWEG) the chain is Extracellular. The N-linked (GlcNAc...) asparagine glycan is linked to asparagine 3. A helical membrane pass occupies residues 9–45 (CHVDSRVDHLFPPSLYIFVIGVGLPTNCLALWAAYRQ). Intrachain disulfides connect cysteine 9–cysteine 258 and cysteine 90–cysteine 168. Residues 46-49 (VRQR) lie on the Cytoplasmic side of the membrane. The chain crosses the membrane as a helical span at residues 50–80 (NELGVYLMNLSIADLLYICTLPLWVDYFLHH). Residues 81 to 85 (DNWIH) lie on the Extracellular side of the membrane. A helical transmembrane segment spans residues 86–121 (GPGSCKLFGFIFYTNIYISIAFLCCISVDRYLAVAH). The Cytoplasmic segment spans residues 122-129 (PLRFARLR). A helical membrane pass occupies residues 130-156 (RVKTAVAVSSVVWATELGANSVPLFHD). Over 157 to 172 (ELFRDRYNHTFCFEKF) the chain is Extracellular. The tract at residues 157 to 172 (ELFRDRYNHTFCFEKF) is extracellular loop 2 (ECL2). Asparagine 164 carries an N-linked (GlcNAc...) asparagine glycan. The chain crosses the membrane as a helical span at residues 173–210 (PMEGWVAWMNLYRVFVGFLFPWALMLLSYRGILRAVRG). Residues 211–214 (SVST) are Cytoplasmic-facing. Residues 215-250 (ERQEKAKIKRLALSLIAIVLVCFAPYHVLLLSRSAV) form a helical membrane-spanning segment. At 251–260 (YLGHPWDCGF) the chain is on the extracellular side. The helical transmembrane segment at 261–289 (EERVFSAYHSSLAFTSLNCVADPILYCLV) threads the bilayer. Over 290–363 (NEGARSDVAK…QLKMLPPPAP (74 aa)) the chain is Cytoplasmic. The tract at residues 344–363 (ASPPSQGDQVQLKMLPPPAP) is disordered.

This sequence belongs to the G-protein coupled receptor 1 family.

It localises to the cell membrane. Activated by a network of residues that connects an extracellular-facing cavity to Glu-145, a conserved charged residue buried in the transmembrane core of the receptor. Protonation likely drives conformational changes in extracellular loop 2 (ECL2), which stabilizes movement of transmembrane 3 (TM3) and a series of rearrangements that connect the extracellular-facing cavity to Glu-145, a residue only conserved in proton-sensing G-protein coupled receptors. Functionally, proton-sensing G-protein coupled receptor activated by extracellular pH, which is required to monitor pH changes and generate adaptive reactions. Activated by an optimal pH of 6.8-7.2. Ligand binding causes a conformation change that triggers signaling via guanine nucleotide-binding proteins (G proteins) and modulates the activity of downstream effectors, such as adenylate cyclase. GPR4 is mainly coupled to G(s) G proteins and mediates activation of adenylate cyclase activity. May also couple with G(q) and G(12)/G(13) G proteins. Acts as a key regulator of respiratory sensitivity to CO2/H(+) in brain retrotrapezoid nucleus neurons: acts by mediating detection of protons generated by the formation of carbonic acid in the blood, an important mechanism to impulse to breathe. Also acts as a regulator of acid secretion in the kidney collecting duct by maintaining acid-base homeostasis in the kidney. Acidosis-induced GPR4 activation increases paracellular gap formation and permeability of vascular endothelial cells, possibly through the G(12)/G(13)/Rho GTPase signaling pathway. This chain is G-protein coupled receptor 4 (GPR4), found in Sus scrofa (Pig).